The sequence spans 367 residues: MAIRVTFTYSSYVARSIASSAGTRVGTGDVRSCFETWVRPRFCGHNQIPDIVDKSPGSNTWGPSSGPRARPASSMYSTIAREILEEGCKSPLVLGMISLMNLTGAPQFSGMTGLGISPFKTSSVIPFLRGSKWMPCSIPATLSTDIAEVDRGGKVCDPKVKLELSDKVSNGGNGWVNKLLNICSEDAKAAFTAVTVSLLFRSALAEPKSIPSTSMLPTLDVGDRVIAEKVSYFFRKPEVSDIVIFKAPPILVEHGYSCADVFIKRIVASEGDWVEVCDGKLLVNDTVQAEDFVLEPIDYEMEPMFVPEGYVFVLGDNRNKSFDSHNWGPLPIKNIIGRSVFRYWPPSKVSDIIHHEQVSQKRAVDVS.

A chloroplast-targeting transit peptide spans 1–68 (MAIRVTFTYS…NTWGPSSGPR (68 aa)). The interval 53–72 (DKSPGSNTWGPSSGPRARPA) is disordered. Positions 62 to 72 (GPSSGPRARPA) are enriched in low complexity. The helical transmembrane segment at 185 to 205 (EDAKAAFTAVTVSLLFRSALA) threads the bilayer. Topologically, residues 206–367 (EPKSIPSTSM…VSQKRAVDVS (162 aa)) are lumenal, thylakoid. Residue serine 214 is part of the active site.

Belongs to the peptidase S26 family.

The protein localises to the plastid. The protein resides in the chloroplast thylakoid membrane. The catalysed reaction is Cleavage of hydrophobic, N-terminal signal or leader sequences from secreted and periplasmic proteins.. In terms of biological role, cleaves the thylakoid-transfer domain from a chloroplast protein. This is Probable thylakoidal processing peptidase 2, chloroplastic (TPP2) from Arabidopsis thaliana (Mouse-ear cress).